The following is a 75-amino-acid chain: UPF0150 protein TM_1313 (75 aa).

Belongs to the UPF0150 family.

The protein is UPF0150 protein TM_1313 of Thermotoga maritima (strain ATCC 43589 / DSM 3109 / JCM 10099 / NBRC 100826 / MSB8).